The primary structure comprises 355 residues: Phosphoribosylformylglycinamidine cyclo-ligase (355 aa).

The protein belongs to the AIR synthase family.

Its subcellular location is the cytoplasm. The catalysed reaction is 2-formamido-N(1)-(5-O-phospho-beta-D-ribosyl)acetamidine + ATP = 5-amino-1-(5-phospho-beta-D-ribosyl)imidazole + ADP + phosphate + H(+). It functions in the pathway purine metabolism; IMP biosynthesis via de novo pathway; 5-amino-1-(5-phospho-D-ribosyl)imidazole from N(2)-formyl-N(1)-(5-phospho-D-ribosyl)glycinamide: step 2/2. This chain is Phosphoribosylformylglycinamidine cyclo-ligase, found in Hamiltonella defensa subsp. Acyrthosiphon pisum (strain 5AT).